A 160-amino-acid chain; its full sequence is Serine-protein kinase RsbW (160 aa).

It belongs to the anti-sigma-factor family.

It catalyses the reaction L-seryl-[protein] + ATP = O-phospho-L-seryl-[protein] + ADP + H(+). The catalysed reaction is L-threonyl-[protein] + ATP = O-phospho-L-threonyl-[protein] + ADP + H(+). Negative regulator of sigma-B activity. Phosphorylates and inactivates its specific antagonist protein, RsbV. Upon phosphorylation of RsbV, RsbW is released and binds to sigma-B, thereby blocking its ability to form an RNA polymerase holoenzyme (E-sigma-B). The chain is Serine-protein kinase RsbW from Bacillus cereus (strain Q1).